The chain runs to 310 residues: Porphobilinogen deaminase (310 aa).

Cysteine 242 is modified (S-(dipyrrolylmethanemethyl)cysteine).

It belongs to the HMBS family. Monomer. Dipyrromethane serves as cofactor.

The enzyme catalyses 4 porphobilinogen + H2O = hydroxymethylbilane + 4 NH4(+). Its pathway is porphyrin-containing compound metabolism; protoporphyrin-IX biosynthesis; coproporphyrinogen-III from 5-aminolevulinate: step 2/4. Its function is as follows. Tetrapolymerization of the monopyrrole PBG into the hydroxymethylbilane pre-uroporphyrinogen in several discrete steps. The sequence is that of Porphobilinogen deaminase from Shewanella baltica (strain OS155 / ATCC BAA-1091).